The chain runs to 220 residues: Iron-sulfur cluster repair protein YtfE (220 aa).

This sequence belongs to the RIC family. YtfE subfamily. As to quaternary structure, homodimer.

It localises to the cytoplasm. Functionally, di-iron-containing protein involved in the repair of iron-sulfur clusters damaged by oxidative and nitrosative stress conditions. This Escherichia coli (strain SMS-3-5 / SECEC) protein is Iron-sulfur cluster repair protein YtfE.